We begin with the raw amino-acid sequence, 473 residues long: uncharacterized protein (473 aa).

The SET domain maps to 26 to 254; that stretch reads PKLYIASSGV…KMSEIFNSFG (229 aa).

This is an uncharacterized protein from Schizosaccharomyces pombe (strain 972 / ATCC 24843) (Fission yeast).